The chain runs to 366 residues: Cytochrome c mitochondrial import factor CYC2 (366 aa).

The transit peptide at 1-50 directs the protein to the mitochondrion; that stretch reads MLWKNYVLSSSRITRRLHKSPRKSSFSKNFFITGCLLTVGAVSSYLTYRY. The FAD-binding FR-type domain occupies 63–184; it reads SYFVKYKISH…RGPFIDYEFP (122 aa).

Requires FAD as cofactor.

It localises to the mitochondrion inner membrane. Functionally, redox component that participates in c-type cytochrome biogenesis in the mitochondrial intermembrane space. May play a role in the reduction of heme prior to its ligation to apocytochrome c by cytochrome c heme lyase. Has oxidoreductase activity in vitro. This is Cytochrome c mitochondrial import factor CYC2 (CYC2) from Saccharomyces cerevisiae (strain ATCC 204508 / S288c) (Baker's yeast).